The sequence spans 165 residues: Large ribosomal subunit protein uL10 (165 aa).

It belongs to the universal ribosomal protein uL10 family. As to quaternary structure, part of the ribosomal stalk of the 50S ribosomal subunit. The N-terminus interacts with L11 and the large rRNA to form the base of the stalk. The C-terminus forms an elongated spine to which L12 dimers bind in a sequential fashion forming a multimeric L10(L12)X complex.

Functionally, forms part of the ribosomal stalk, playing a central role in the interaction of the ribosome with GTP-bound translation factors. The chain is Large ribosomal subunit protein uL10 from Edwardsiella ictaluri (strain 93-146).